Consider the following 117-residue polypeptide: Hainantoxin-XV (117 aa).

The first 20 residues, 1–20 (MKLCAVIIASLLVCVAVASS), serve as a signal peptide directing secretion. Positions 20-55 (SSDNQKEFAQEKEMTREETQSLGEHEKDDEVTGSEE) are disordered. The propeptide occupies 21–56 (SDNQKEFAQEKEMTREETQSLGEHEKDDEVTGSEER). A compositionally biased stretch (basic and acidic residues) spans 23–55 (NQKEFAQEKEMTREETQSLGEHEKDDEVTGSEE). 4 cysteine pairs are disulfide-bonded: C58–C72, C65–C78, C69–C115, and C71–C91.

This sequence belongs to the neurotoxin 03 (Tx2) family. 02 subfamily. HNTX-XV sub-subfamily. Expressed by the venom gland.

It is found in the secreted. Its function is as follows. Putative ion channel inhibitor. The chain is Hainantoxin-XV from Cyriopagopus hainanus (Chinese bird spider).